The primary structure comprises 276 residues: Hydroxycinnamoyl-CoA hydratase-lyase (276 aa).

Acetyl-CoA contacts are provided by lysine 29, alanine 68, methionine 70, and leucine 72. Tyrosine 75 is a vanillin binding site. The acetyl-CoA site is built by glycine 120, serine 142, and tryptophan 146. 2 residues coordinate vanillin: glycine 151 and tyrosine 239.

Belongs to the enoyl-CoA hydratase/isomerase family. In terms of assembly, homohexamer; dimer of trimers.

It catalyses the reaction (E)-feruloyl-CoA + H2O = vanillin + acetyl-CoA. It carries out the reaction (E)-caffeoyl-CoA + H2O = 3,4-dihydroxybenzaldehyde + acetyl-CoA. The catalysed reaction is (E)-4-coumaroyl-CoA + H2O = 4-hydroxybenzaldehyde + acetyl-CoA. The enzyme catalyses (E)-feruloyl-CoA + H2O = 3-hydroxy-3-(4-hydroxy-3-methoxyphenyl)propanoyl-CoA. It catalyses the reaction 3-hydroxy-3-(4-hydroxy-3-methoxyphenyl)propanoyl-CoA = vanillin + acetyl-CoA. It carries out the reaction (E)-caffeoyl-CoA + H2O = 3-hydroxy-3-(3,4-dihydroxyphenyl)propanoyl-CoA. The catalysed reaction is 3-hydroxy-3-(3,4-dihydroxyphenyl)propanoyl-CoA = 3,4-dihydroxybenzaldehyde + acetyl-CoA. The enzyme catalyses (E)-4-coumaroyl-CoA + H2O = 3-hydroxy-3-(4-hydroxyphenyl)propanoyl-CoA. It catalyses the reaction 3-hydroxy-3-(4-hydroxyphenyl)propanoyl-CoA = 4-hydroxybenzaldehyde + acetyl-CoA. Its function is as follows. Catalyzes the hydration of the acyl-CoA thioester of ferulic acid and the subsequent retro-aldol cleavage of the hydrated intermediate to yield vanillin (4-hydroxy-3-methoxy-benzaldehyde). The enzyme is also active with caffeoyl-CoA and 4-coumaroyl-CoA producing 3,4-dihydroxybenzaldehyde and 4-hydroxybenzaldehyde, respectively. The chain is Hydroxycinnamoyl-CoA hydratase-lyase from Pseudomonas fluorescens.